A 211-amino-acid polypeptide reads, in one-letter code: 3-demethoxyubiquinol 3-hydroxylase (211 aa).

Positions 60, 90, 93, 142, 174, and 177 each coordinate Fe cation.

It belongs to the COQ7 family. The cofactor is Fe cation.

The protein resides in the cell membrane. The enzyme catalyses a 5-methoxy-2-methyl-3-(all-trans-polyprenyl)benzene-1,4-diol + AH2 + O2 = a 3-demethylubiquinol + A + H2O. It participates in cofactor biosynthesis; ubiquinone biosynthesis. Its function is as follows. Catalyzes the hydroxylation of 2-nonaprenyl-3-methyl-6-methoxy-1,4-benzoquinol during ubiquinone biosynthesis. In Acinetobacter baumannii (strain AB307-0294), this protein is 3-demethoxyubiquinol 3-hydroxylase.